Here is a 286-residue protein sequence, read N- to C-terminus: 4-hydroxybenzoate octaprenyltransferase (286 aa).

Helical transmembrane passes span 22–42 (IGTL…SAGV), 45–65 (FSLL…GCVI), 90–110 (LTAV…FVLV), 113–133 (LNQF…IYPF), 142–162 (QVVL…AVVG), 169–189 (WLLF…YAMV), 212–232 (LYIA…GWLE), 236–256 (VSYY…QWLI), and 265–285 (FRAF…IMLA).

It belongs to the UbiA prenyltransferase family. Mg(2+) is required as a cofactor.

It localises to the cell inner membrane. It carries out the reaction all-trans-octaprenyl diphosphate + 4-hydroxybenzoate = 4-hydroxy-3-(all-trans-octaprenyl)benzoate + diphosphate. It functions in the pathway cofactor biosynthesis; ubiquinone biosynthesis. Functionally, catalyzes the prenylation of para-hydroxybenzoate (PHB) with an all-trans polyprenyl group. Mediates the second step in the final reaction sequence of ubiquinone-8 (UQ-8) biosynthesis, which is the condensation of the polyisoprenoid side chain with PHB, generating the first membrane-bound Q intermediate 3-octaprenyl-4-hydroxybenzoate. The polypeptide is 4-hydroxybenzoate octaprenyltransferase (Tolumonas auensis (strain DSM 9187 / NBRC 110442 / TA 4)).